Reading from the N-terminus, the 163-residue chain is ATP synthase subunit b (163 aa).

The helical transmembrane segment at 10–29 (VFMQMFHFLLMLVVLRLFAY) threads the bilayer.

This sequence belongs to the ATPase B chain family. F-type ATPases have 2 components, F(1) - the catalytic core - and F(0) - the membrane proton channel. F(1) has five subunits: alpha(3), beta(3), gamma(1), delta(1), epsilon(1). F(0) has three main subunits: a(1), b(2) and c(10-14). The alpha and beta chains form an alternating ring which encloses part of the gamma chain. F(1) is attached to F(0) by a central stalk formed by the gamma and epsilon chains, while a peripheral stalk is formed by the delta and b chains.

It localises to the cell membrane. F(1)F(0) ATP synthase produces ATP from ADP in the presence of a proton or sodium gradient. F-type ATPases consist of two structural domains, F(1) containing the extramembraneous catalytic core and F(0) containing the membrane proton channel, linked together by a central stalk and a peripheral stalk. During catalysis, ATP synthesis in the catalytic domain of F(1) is coupled via a rotary mechanism of the central stalk subunits to proton translocation. Functionally, component of the F(0) channel, it forms part of the peripheral stalk, linking F(1) to F(0). The chain is ATP synthase subunit b from Desulforudis audaxviator (strain MP104C).